The following is a 106-amino-acid chain: Tapetal oleosin GRP-19 (106 aa).

3 helical membrane passes run 14–34 (ALALLTFAGITLGGSVVACII), 37–57 (PLFVIFSPVLVPATIATTLLA), and 58–78 (SGFTASGSFGATAFTILSWLY). A disordered region spans residues 84-106 (RDLPKIPGLTPPAPASNPAGSGV).

This sequence belongs to the oleosin family. Proteolytically cleaved following anther tapetal breakdown. As to expression, present in pollen (at protein level). Inflorescence-specific expression, especially in flowers florets.

The protein resides in the secreted. Its subcellular location is the extracellular space. It is found in the extracellular matrix. It localises to the pollen coat. The protein localises to the lipid droplet. The protein resides in the membrane. Lipid-binding oleosin involved in anther tapetum development, especially for the physiology of tapetosomes. Also implicated in the formation of pollen coat. This chain is Tapetal oleosin GRP-19, found in Arabidopsis thaliana (Mouse-ear cress).